The chain runs to 439 residues: D-inositol 3-phosphate glycosyltransferase (439 aa).

His21 provides a ligand contact to 1D-myo-inositol 3-phosphate. UDP-N-acetyl-alpha-D-glucosamine-binding positions include 27-28 (QP) and Gly35. 1D-myo-inositol 3-phosphate is bound by residues 32–37 (DAGGMN), Lys90, Tyr123, Thr147, and Arg167. The UDP-N-acetyl-alpha-D-glucosamine site is built by Arg241, Lys246, and Gln299. The Mg(2+) site is built by Tyr308, Arg309, and Ala311. UDP-N-acetyl-alpha-D-glucosamine is bound by residues Glu321 and Glu329. Thr335 provides a ligand contact to Mg(2+).

Belongs to the glycosyltransferase group 1 family. MshA subfamily. As to quaternary structure, homodimer.

The enzyme catalyses 1D-myo-inositol 3-phosphate + UDP-N-acetyl-alpha-D-glucosamine = 1D-myo-inositol 2-acetamido-2-deoxy-alpha-D-glucopyranoside 3-phosphate + UDP + H(+). Functionally, catalyzes the transfer of a N-acetyl-glucosamine moiety to 1D-myo-inositol 3-phosphate to produce 1D-myo-inositol 2-acetamido-2-deoxy-glucopyranoside 3-phosphate in the mycothiol biosynthesis pathway. This Mycobacterium sp. (strain JLS) protein is D-inositol 3-phosphate glycosyltransferase.